A 174-amino-acid chain; its full sequence is uncharacterized protein (174 aa).

2 stretches are compositionally biased toward basic and acidic residues: residues Met1–Gly31 and Glu52–Ser67. The segment at Met1–Ser69 is disordered.

This is an uncharacterized protein from Homo sapiens (Human).